Reading from the N-terminus, the 415-residue chain is Putative glutamate--cysteine ligase 2 (415 aa).

It belongs to the glutamate--cysteine ligase type 2 family. YbdK subfamily.

The catalysed reaction is L-cysteine + L-glutamate + ATP = gamma-L-glutamyl-L-cysteine + ADP + phosphate + H(+). Functionally, ATP-dependent carboxylate-amine ligase which exhibits weak glutamate--cysteine ligase activity. This is Putative glutamate--cysteine ligase 2 from Bordetella petrii (strain ATCC BAA-461 / DSM 12804 / CCUG 43448).